A 242-amino-acid polypeptide reads, in one-letter code: MSEGLQRCFVLHRRPYSESSLILDVFSEEYGRVTLMSKGARSKRSNLKGALQPFTPLLLKWSGNGSMKTLRQAEPISLGLPLAGINLYSAMYVNELVGRVLMAEVAMPAFFHDYLHALTELAHNENPEPALRRFELALLSAMGYGVDFLHCAGTGEAIDPSMTYRYREQKGFIASVRRDNLTFMGDELIAISERRFITKEQLKAAKRFTRIALKPYLGGKPLKSRELFMPTIALSRARSIGK.

It belongs to the RecO family.

Functionally, involved in DNA repair and RecF pathway recombination. In Vibrio atlanticus (strain LGP32) (Vibrio splendidus (strain Mel32)), this protein is DNA repair protein RecO.